We begin with the raw amino-acid sequence, 637 residues long: CREB-regulated transcription coactivator 3 (637 aa).

A Phosphoserine modification is found at serine 66. Residues 105–115 (NRLHSSHHRPI) are compositionally biased toward basic residues. 2 disordered regions span residues 105–184 (NRLH…SLQD) and 269–288 (HFPS…YANI). The residue at position 133 (serine 133) is a Phosphoserine. Threonine 143 bears the Phosphothreonine mark. Serine 145 carries the post-translational modification Phosphoserine; by SIK2. The segment covering 145-159 (SDSALHTSASSTKSQ) has biased composition (polar residues). Threonine 151 is subject to Phosphothreonine. Serine 293 bears the Phosphoserine mark. The tract at residues 299-462 (AMTHLGISGS…QNYQPPSPVP (164 aa)) is disordered. The span at 309–337 (PGMQNTRSNPSIQATMNNNSLASNVNSHT) shows a compositional bias: polar residues. Positions 344–365 (PALHPSLRLSSLSNPSLPTSAL) are enriched in low complexity. Phosphoserine occurs at positions 377 and 396. Residues 377–395 (SPLTLTPGSESNRSISNQF) are compositionally biased toward polar residues. Over residues 396-407 (SPTSPMNMPPNS) the composition is skewed to low complexity. Residues 418 to 429 (SLPPLEPPPPYP) show a composition bias toward pro residues. The span at 430–447 (LYSDQPQPHLHHTQQQMH) shows a compositional bias: low complexity. Phosphoserine is present on serine 561. The tract at residues 615-637 (MLSDPDMVLPDPSIEDSFRSDKL) is disordered.

The protein belongs to the TORC family. Binding, as a tetramer, through its N-terminal region, with the bZIP domain of creb1 enhances recruitment of taf4 to the promoter. 'Arg-300' in the bZIP domain of creb1 is essential for this interaction.

It is found in the nucleus. It localises to the cytoplasm. In terms of biological role, transcriptional coactivator for creb1 which activates transcription through both consensus and variant cAMP response element (CRE) sites. Acts as a coactivator, in the SIK/TORC signaling pathway, being active when dephosphorylated and acts independently of creb1 'Ser-119' phosphorylation. Enhances the interaction of creb1 with taf4. Regulates the expression of specific CREB-activated genes such as the steroidogenic gene, StAR. Potent coactivator of ppargc1a and inducer of mitochondrial biogenesis in muscle cells. The sequence is that of CREB-regulated transcription coactivator 3 (crtc3) from Xenopus tropicalis (Western clawed frog).